Consider the following 254-residue polypeptide: Indole-3-glycerol phosphate synthase (254 aa).

Belongs to the TrpC family.

The enzyme catalyses 1-(2-carboxyphenylamino)-1-deoxy-D-ribulose 5-phosphate + H(+) = (1S,2R)-1-C-(indol-3-yl)glycerol 3-phosphate + CO2 + H2O. It functions in the pathway amino-acid biosynthesis; L-tryptophan biosynthesis; L-tryptophan from chorismate: step 4/5. The sequence is that of Indole-3-glycerol phosphate synthase from Methanopyrus kandleri (strain AV19 / DSM 6324 / JCM 9639 / NBRC 100938).